We begin with the raw amino-acid sequence, 164 residues long: UPF0304 protein HSM_1818 (164 aa).

It belongs to the UPF0304 family.

The sequence is that of UPF0304 protein HSM_1818 from Histophilus somni (strain 2336) (Haemophilus somnus).